A 267-amino-acid polypeptide reads, in one-letter code: MAIPAFGLGTFRLKDDVVISSVKTALELGYRAIDTAQIYDNEAAVGLAIAESGVPRHELYITTKIWIENLSKDKLIPSLKESLQKLRTDYVDLTLIHWPSPNDEVSVEEFMQALLEAKKEGLTREIGISNFTIPLMEKAIAAVGAENIATNQIELSPYLQNRKVVAWAKQHGIHITSYMTLAYGKALKDEVIARIAAKHNATPAQVILAWAMGEGYSVIPSSTKRENLESNLKAQNLQLDAEDKKAIAALDCNDRLVSPEGLAPEWD.

Tyrosine 39 serves as the catalytic Proton donor. Residue histidine 97 participates in substrate binding. An NADP(+)-binding site is contributed by 179–231 (MTLAYGKALKDEVIARIAAKHNATPAQVILAWAMGEGYSVIPSSTKRENLESN).

The protein belongs to the aldo/keto reductase family. As to quaternary structure, monomer.

The protein localises to the cytoplasm. It catalyses the reaction hydroxyacetone + NADP(+) = methylglyoxal + NADPH + H(+). Aldo-keto reductase that significantly contributes to cellular methylglyoxal detoxification by catalyzing the NADPH-dependent conversion of methylglyoxal to acetol. This Escherichia coli O157:H7 protein is Methylglyoxal reductase DkgB.